The sequence spans 420 residues: Histidine--tRNA ligase (420 aa).

It belongs to the class-II aminoacyl-tRNA synthetase family. As to quaternary structure, homodimer.

It is found in the cytoplasm. It catalyses the reaction tRNA(His) + L-histidine + ATP = L-histidyl-tRNA(His) + AMP + diphosphate + H(+). In Mycobacterium marinum (strain ATCC BAA-535 / M), this protein is Histidine--tRNA ligase.